Here is a 1418-residue protein sequence, read N- to C-terminus: Chromatin remodeling factor mit1 (1418 aa).

A compositionally biased stretch (low complexity) spans 135–148 (DETASDSATSSSSD). The disordered stretch occupies residues 135-156 (DETASDSATSSSSDTNKKVNRK). The PHD-type zinc finger occupies 212–271 (VCVCVKCHGREHRSSGKNFVYCDHCSNVYHYDCSPLPSLNKETRNYSQQNGFICPLCSKN). The segment at 215 to 269 (CVKCHGREHRSSGKNFVYCDHCSNVYHYDCSPLPSLNKETRNYSQQNGFICPLCS) adopts an RING-type; atypical zinc-finger fold. The region spanning 568 to 738 (YLRWYTHHPC…FNLLQFLNPM (171 aa)) is the Helicase ATP-binding domain. 581-588 (DEMGLGKT) is a binding site for ATP. In terms of domain architecture, Helicase C-terminal spans 875–1034 (ILRLLVPKLI…QNHNSEKDLE (160 aa)).

The protein belongs to the SNF2/RAD54 helicase family. In terms of assembly, interacts with clr3.

The protein resides in the nucleus. It localises to the chromosome. It is found in the centromere. The protein localises to the telomere. Its function is as follows. Required for proper positioning of nucleosomes at heterochromatic loci and for transcriptional gene silencing (TGS) function of the Snf2/Hdac-containing repressor complex (SHREC). The protein is Chromatin remodeling factor mit1 (mit1) of Schizosaccharomyces pombe (strain 972 / ATCC 24843) (Fission yeast).